Here is a 490-residue protein sequence, read N- to C-terminus: Sphingomyelinase (490 aa).

An N-terminal signal peptide occupies residues 1 to 31 (MDYAKRIGQVGALAVVLGVGAAVTTHAIGSA). Positions 30–49 (SAAPTDPSSSSTDSPVDACS) are disordered. Residues 32-136 (APTDPSSSST…FDACDPDGNR (105 aa)) are Periplasmic-facing. A beta stranded transmembrane segment spans residues 137-145 (MTFAVRERG). The Extracellular segment spans residues 146–161 (APGGPQHGIVTVDQRT). A beta stranded membrane pass occupies residues 162-168 (ASFIYTA). Topologically, residues 169–171 (DPG) are periplasmic. Residues 172–182 (FVGTDTFSVNV) form a beta stranded membrane-spanning segment. Topologically, residues 183–187 (SDDTS) are extracellular. A beta stranded transmembrane segment spans residues 188 to 196 (LHVHGLAGY). Residues 197–204 (LGPFHGHD) are Periplasmic-facing. The beta stranded transmembrane segment at 205–213 (DVATVTVFV) threads the bilayer. The Extracellular segment spans residues 214-490 (GNTPTDTISG…HYVADNVAVR (277 aa)).

Belongs to the SpmT family.

It is found in the cell outer membrane. The catalysed reaction is a sphingomyelin + H2O = phosphocholine + an N-acylsphing-4-enine + H(+). Catalyzes the cleavage of sphingomyelin, a major lipid in eukaryotic cells, into ceramide and phosphocholine, which are then utilized by M.bovis as carbon, nitrogen and phosphorus sources, respectively. Thus, enables M.bovis to utilize sphingomyelin as a source of several essential nutrients for intracellular growth during infection. Furthermore, lyses erythrocytes and constitutes a hemolytic factor. This Mycobacterium bovis (strain ATCC BAA-935 / AF2122/97) protein is Sphingomyelinase.